The sequence spans 358 residues: Snurportin-1 (358 aa).

Methionine 1 is modified (N-acetylmethionine). Disordered stretches follow at residues 1–26 (MEEL…APHP) and 69–90 (DWTG…MDID). Residues 1–65 (MEELSQALAS…LDYVNHARRL (65 aa)) are necessary for interaction with KPNB1 and m3G-cap U1 and U5 snRNP import receptor activity. A necessary for interaction with XPO1 region spans residues 1-160 (MEELSQALAS…NRFSSLLPGG (160 aa)). A compositionally biased stretch (polar residues) spans 7–22 (ALASSFSVSQELNSTA). Residues 11-73 (SFSVSQELNS…RLAEDDWTGM (63 aa)) form the IBB domain. Serine 75 is subject to Phosphoserine. The tract at residues 128–130 (GKR) is interaction with m3G-cap structure. Positions 210–329 (MHSKLPEEEG…DTKEKLTHKA (120 aa)) are necessary for binding to the m3G-cap structure. Residues 315 to 341 (KRSQEDTKEKLTHKASENGHYELEHLS) show a composition bias toward basic and acidic residues. The segment at 315-358 (KRSQEDTKEKLTHKASENGHYELEHLSTPKLRNPPHSSESLMDN) is disordered. The segment covering 349–358 (PHSSESLMDN) has biased composition (polar residues). Serine 351 carries the phosphoserine modification.

Belongs to the snurportin family. As to quaternary structure, component of an import snRNP complex composed of KPNB1, SNUPN, SMN1 and ZNF259. Component of a nuclear export receptor complex composed of KPNB1, Ran, SNUPN and XPO1. Found in a trimeric export complex with SNUPN, Ran and XPO1. Interacts (via IBB domain) with KPNB1; the interaction is direct. Interacts with DDX20, IPO7, SMN1, SNRPB and XPO1. Interacts directly with XPO1. Its interaction with XPO1 and binding to m3G-cap U snRNPs appears to be mutually exclusive. Can form homomers.

It is found in the nucleus. The protein resides in the cytoplasm. Functions as an U snRNP-specific nuclear import adapter. Involved in the trimethylguanosine (m3G)-cap-dependent nuclear import of U snRNPs. Binds specifically to the terminal m3G-cap U snRNAs. This Mus musculus (Mouse) protein is Snurportin-1 (Snupn).